A 593-amino-acid chain; its full sequence is Mitoguardin 2 (593 aa).

2 helical membrane-spanning segments follow: residues 11-31 and 42-62; these read MIQA…TTFG and PGLR…ALAA. 3 disordered regions span residues 98 to 134, 150 to 171, and 197 to 229; these read PSVK…HSGS, TAAC…TTDG, and VGQR…PESQ. 2 stretches are compositionally biased toward low complexity: residues 106-116 and 124-134; these read SRRVQSPSSKS and SSIEPSKHSGS. Position 132 is a phosphoserine (Ser132). Residues 205–218 show a composition bias toward polar residues; it reads STPTPGDSLQNPDT. Thr206 carries the post-translational modification Phosphothreonine. 3 positions are modified to phosphoserine: Ser220, Ser224, and Ser228. Thr273 carries the post-translational modification Phosphothreonine. Residues Ser276 and Ser295 each carry the phosphoserine modification. Residues 292–298 carry the FFAT motif; it reads SFFSATE.

It belongs to the mitoguardin family. Homodimer and heterodimer; forms heterodimers with MIGA1. Interacts with PLD6/MitoPLD. Interacts (via phosphorylated FFAT motif) with MOSPD2. Post-translationally, phosphorylation at Ser-295 of the FFAT motif activates interaction with MOSPD2.

Its subcellular location is the mitochondrion outer membrane. Its function is as follows. Regulator of mitochondrial fusion. Acts by forming homo- and heterodimers at the mitochondrial outer membrane and facilitating the formation of PLD6/MitoPLD dimers. May act by regulating phospholipid metabolism via PLD6/MitoPLD. The sequence is that of Mitoguardin 2 from Mus musculus (Mouse).